Here is a 144-residue protein sequence, read N- to C-terminus: MQNRLIEIFNETDFDQFDIELMESITSQLTDRPVELMIVDDERMRTLNKTYRDIDKTTDVLSFPMQEIPNAPLGSIVINADKVLHTAKELGHSAKDEFALLYIHGLLHLLGYDHESDNGEMRAMEEKLIIEYNLPKSLIIRTYE.

3 residues coordinate Zn(2+): His104, His108, and His114.

Belongs to the endoribonuclease YbeY family. Requires Zn(2+) as cofactor.

The protein resides in the cytoplasm. Functionally, single strand-specific metallo-endoribonuclease involved in late-stage 70S ribosome quality control and in maturation of the 3' terminus of the 16S rRNA. The protein is Endoribonuclease YbeY of Nitratiruptor sp. (strain SB155-2).